The sequence spans 124 residues: Small ribosomal subunit protein bS6 (124 aa).

The tract at residues 96-124 (ETGPSPMMKEVQREEAKKAAAAQPAEAQA) is disordered. Positions 114–124 (AAAAQPAEAQA) are enriched in low complexity.

This sequence belongs to the bacterial ribosomal protein bS6 family.

In terms of biological role, binds together with bS18 to 16S ribosomal RNA. The chain is Small ribosomal subunit protein bS6 from Burkholderia orbicola (strain AU 1054).